Reading from the N-terminus, the 88-residue chain is CRISPR-associated endoribonuclease Cas2 3 (88 aa).

D9 provides a ligand contact to Mg(2+).

The protein belongs to the CRISPR-associated endoribonuclease Cas2 protein family. As to quaternary structure, homodimer, forms a heterotetramer with a Cas1 homodimer. It depends on Mg(2+) as a cofactor.

Functionally, CRISPR (clustered regularly interspaced short palindromic repeat), is an adaptive immune system that provides protection against mobile genetic elements (viruses, transposable elements and conjugative plasmids). CRISPR clusters contain sequences complementary to antecedent mobile elements and target invading nucleic acids. CRISPR clusters are transcribed and processed into CRISPR RNA (crRNA). Functions as a ssRNA-specific endoribonuclease. Involved in the integration of spacer DNA into the CRISPR cassette. The protein is CRISPR-associated endoribonuclease Cas2 3 of Thermodesulfovibrio yellowstonii (strain ATCC 51303 / DSM 11347 / YP87).